Reading from the N-terminus, the 211-residue chain is Protein-L-isoaspartate O-methyltransferase (211 aa).

S62 is a catalytic residue.

Belongs to the methyltransferase superfamily. L-isoaspartyl/D-aspartyl protein methyltransferase family.

The protein resides in the cytoplasm. It carries out the reaction [protein]-L-isoaspartate + S-adenosyl-L-methionine = [protein]-L-isoaspartate alpha-methyl ester + S-adenosyl-L-homocysteine. Catalyzes the methyl esterification of L-isoaspartyl residues in peptides and proteins that result from spontaneous decomposition of normal L-aspartyl and L-asparaginyl residues. It plays a role in the repair and/or degradation of damaged proteins. The sequence is that of Protein-L-isoaspartate O-methyltransferase from Shewanella woodyi (strain ATCC 51908 / MS32).